Reading from the N-terminus, the 239-residue chain is Putative zinc finger protein 132L (239 aa).

The tract at residues 20–40 (DASLSTKSPKREPSQEKEIKK) is disordered. Residues 28–40 (PKREPSQEKEIKK) show a composition bias toward basic and acidic residues. 2 C3H1-type zinc fingers span residues 44-68 (IKKN…HPGE) and 81-106 (RRKT…HDES). Residues 128–151 (PGECKFSHPPPPPPSPPSPPPKEE) are disordered. Pro residues predominate over residues 135-147 (HPPPPPPSPPSPP).

The protein is Putative zinc finger protein 132L of Acheta domesticus (House cricket).